The following is a 244-amino-acid chain: Ras-related protein Rab-12 (244 aa).

At Met-1 the chain carries N-acetylmethionine. Residues 1–10 show a composition bias toward low complexity; it reads MDPGAALQRR. The disordered stretch occupies residues 1 to 37; the sequence is MDPGAALQRRAGGGGGLGAGSPALSGGQGRRRKQPPR. Phosphoserine occurs at positions 21 and 25. Residue Gly-52 participates in GDP binding. The GTP site is built by Gly-52, Val-53, Gly-54, Lys-55, and Thr-56. Gly-54, Lys-55, Thr-56, and Ser-57 together coordinate GDP. Position 56 (Thr-56) interacts with Mg(2+). 2 consecutive short sequence motifs (switch) follow at residues 65-79 and 97-114; these read DTFC…GVDF and DTAG…YYRS. GTP-binding residues include Ser-73 and Thr-74. Residues Thr-74 and Asp-97 each contribute to the Mg(2+) site. Gly-100 contributes to the GTP binding site. Ser-106 is subject to Phosphoserine; by LRRK2. 4 residues coordinate GDP: Asn-155, Lys-156, Asp-158, and Cys-159. Positions 155, 156, and 158 each coordinate GTP. GTP is bound by residues Ser-186, Ala-187, and Lys-188. Positions 187 and 188 each coordinate GDP. A disordered region spans residues 225-244; sequence QPEPEIPPELPPPRPHVRCC. Over residues 228-238 the composition is skewed to pro residues; sequence PEIPPELPPPR. S-geranylgeranyl cysteine attachment occurs at residues Cys-243 and Cys-244.

The protein belongs to the small GTPase superfamily. Rab family. As to quaternary structure, interacts with RABIF. Interacts with OPTN. Interacts with LRRK2; interaction facilitates phosphorylation of Ser-106. Interacts with GDI1, GDI2, CHM and CHML; these interactions are disrupted by phosphorylation on Ser-106. Interacts with RILPL1 and RILPL2; these interactions are dependent on phosphorylation of Ser-106. It depends on Mg(2+) as a cofactor. Phosphorylation of Ser-106 in the switch II region by LRRK2 prevents the association of RAB regulatory proteins, including CHM, CHML and RAB GDP dissociation inhibitors GDI1 and GDI2.

The protein resides in the recycling endosome membrane. It localises to the lysosome membrane. The protein localises to the golgi apparatus membrane. It is found in the cytoplasmic vesicle. Its subcellular location is the autophagosome. The enzyme catalyses GTP + H2O = GDP + phosphate + H(+). With respect to regulation, regulated by guanine nucleotide exchange factors (GEFs) including DENND3 which promote the exchange of bound GDP for free GTP. Regulated by GTPase activating proteins (GAPs) which increase the GTP hydrolysis activity. Inhibited by GDP dissociation inhibitors (GDIs). Functionally, the small GTPases Rab are key regulators of intracellular membrane trafficking, from the formation of transport vesicles to their fusion with membranes. Rabs cycle between an inactive GDP-bound form and an active GTP-bound form that is able to recruit to membranes different sets of downstream effectors directly responsible for vesicle formation, movement, tethering and fusion. RAB12 may play a role in protein transport from recycling endosomes to lysosomes regulating, for instance, the degradation of the transferrin receptor. Involved in autophagy. This Homo sapiens (Human) protein is Ras-related protein Rab-12.